A 305-amino-acid polypeptide reads, in one-letter code: Coenzyme PQQ synthesis protein B (305 aa).

Belongs to the PqqB family.

It participates in cofactor biosynthesis; pyrroloquinoline quinone biosynthesis. In terms of biological role, may be involved in the transport of PQQ or its precursor to the periplasm. The sequence is that of Coenzyme PQQ synthesis protein B from Cupriavidus necator (strain ATCC 17699 / DSM 428 / KCTC 22496 / NCIMB 10442 / H16 / Stanier 337) (Ralstonia eutropha).